The primary structure comprises 137 residues: MLKANRLSIYAIGKIKKKWIREGINQYKKRMPDLIINESKSFNIDNIRVNNIIICLTEEGKSFSSTELTSLLLNFKNKKINFLIGDADGIPSDIKDKSHLLLSLSPLTFPHELARLILVEQIYRVISISNGSPYHRA.

Residues Leu-56, Gly-85, and 104–109 (LSPLTF) contribute to the S-adenosyl-L-methionine site.

This sequence belongs to the RNA methyltransferase RlmH family. In terms of assembly, homodimer.

It localises to the cytoplasm. It catalyses the reaction pseudouridine(1915) in 23S rRNA + S-adenosyl-L-methionine = N(3)-methylpseudouridine(1915) in 23S rRNA + S-adenosyl-L-homocysteine + H(+). Its function is as follows. Specifically methylates the pseudouridine at position 1915 (m3Psi1915) in 23S rRNA. The chain is Ribosomal RNA large subunit methyltransferase H from Prochlorococcus marinus (strain MIT 9515).